The sequence spans 132 residues: Pollen allergen Phl p 6 (132 aa).

Positions 1 to 22 (MVAMFLAVAVVLGLATSPTAEG) are cleaved as a signal peptide.

This sequence belongs to the Poa p IX/Phl p VI allergen family.

This Phleum pratense (Common timothy) protein is Pollen allergen Phl p 6 (PHLPVI).